We begin with the raw amino-acid sequence, 121 residues long: Ribosome-binding factor A (121 aa).

This sequence belongs to the RbfA family. In terms of assembly, monomer. Binds 30S ribosomal subunits, but not 50S ribosomal subunits or 70S ribosomes.

It localises to the cytoplasm. Functionally, one of several proteins that assist in the late maturation steps of the functional core of the 30S ribosomal subunit. Associates with free 30S ribosomal subunits (but not with 30S subunits that are part of 70S ribosomes or polysomes). Required for efficient processing of 16S rRNA. May interact with the 5'-terminal helix region of 16S rRNA. This Clostridium acetobutylicum (strain ATCC 824 / DSM 792 / JCM 1419 / IAM 19013 / LMG 5710 / NBRC 13948 / NRRL B-527 / VKM B-1787 / 2291 / W) protein is Ribosome-binding factor A.